The following is a 338-amino-acid chain: 4-hydroxy-2-oxovalerate aldolase (338 aa).

In terms of domain architecture, Pyruvate carboxyltransferase spans 4-254; the sequence is PRLTDTTLRD…NPGLDVLALM (251 aa). 12 to 13 lines the substrate pocket; it reads RD. Position 13 (D13) interacts with Mn(2+). H16 functions as the Proton acceptor in the catalytic mechanism. The substrate site is built by S166 and H193. Mn(2+) contacts are provided by H193 and H195. Y284 serves as a coordination point for substrate.

It belongs to the 4-hydroxy-2-oxovalerate aldolase family.

It carries out the reaction (S)-4-hydroxy-2-oxopentanoate = acetaldehyde + pyruvate. The sequence is that of 4-hydroxy-2-oxovalerate aldolase from Roseiflexus sp. (strain RS-1).